Here is a 188-residue protein sequence, read N- to C-terminus: Large ribosomal subunit protein uL5 (188 aa).

Belongs to the universal ribosomal protein uL5 family. As to quaternary structure, part of the 50S ribosomal subunit; part of the 5S rRNA/L5/L18/L25 subcomplex. Contacts the 5S rRNA and the P site tRNA. Forms a bridge to the 30S subunit in the 70S ribosome.

This is one of the proteins that bind and probably mediate the attachment of the 5S RNA into the large ribosomal subunit, where it forms part of the central protuberance. In the 70S ribosome it contacts protein S13 of the 30S subunit (bridge B1b), connecting the 2 subunits; this bridge is implicated in subunit movement. Contacts the P site tRNA; the 5S rRNA and some of its associated proteins might help stabilize positioning of ribosome-bound tRNAs. The protein is Large ribosomal subunit protein uL5 of Aquifex aeolicus (strain VF5).